A 121-amino-acid chain; its full sequence is Non-specific lipid-transfer protein 3 (121 aa).

A signal peptide spans 1 to 28; the sequence is MAGARRTMALVALVAVVAAAVVAERASA. 4 disulfide bridges follow: Cys32/Cys80, Cys42/Cys57, Cys58/Cys103, and Cys78/Cys117.

It belongs to the plant LTP family.

In terms of biological role, plant non-specific lipid-transfer proteins transfer phospholipids as well as galactolipids across membranes. May play a role in wax or cutin deposition in the cell walls of expanding epidermal cells and certain secretory tissues. May possess an antifungal activity and protect the plant against pathogens. In Oryza sativa subsp. indica (Rice), this protein is Non-specific lipid-transfer protein 3 (LTP110-A).